Here is a 271-residue protein sequence, read N- to C-terminus: Aminodeoxychorismate lyase (271 aa).

Lys140 is subject to N6-(pyridoxal phosphate)lysine.

The protein belongs to the class-IV pyridoxal-phosphate-dependent aminotransferase family. In terms of assembly, homodimer. Pyridoxal 5'-phosphate is required as a cofactor.

The enzyme catalyses 4-amino-4-deoxychorismate = 4-aminobenzoate + pyruvate + H(+). Its pathway is cofactor biosynthesis; tetrahydrofolate biosynthesis; 4-aminobenzoate from chorismate: step 2/2. Involved in the biosynthesis of p-aminobenzoate (PABA), a precursor of tetrahydrofolate. Converts 4-amino-4-deoxychorismate into 4-aminobenzoate (PABA) and pyruvate. The protein is Aminodeoxychorismate lyase (pabC) of Vibrio harveyi (Beneckea harveyi).